The following is a 248-amino-acid chain: Exosome complex component Rrp41 (248 aa).

This sequence belongs to the RNase PH family. Rrp41 subfamily. Component of the archaeal exosome complex. Forms a hexameric ring-like arrangement composed of 3 Rrp41-Rrp42 heterodimers. The hexameric ring associates with a trimer of Rrp4 and/or Csl4 subunits.

The protein localises to the cytoplasm. Catalytic component of the exosome, which is a complex involved in RNA degradation. Has 3'-&gt;5' exoribonuclease activity. Can also synthesize heteromeric RNA-tails. This chain is Exosome complex component Rrp41, found in Thermoplasma acidophilum (strain ATCC 25905 / DSM 1728 / JCM 9062 / NBRC 15155 / AMRC-C165).